The chain runs to 541 residues: L-ornithine N(5)-monooxygenase (541 aa).

Residues 50-58 and Gln69 each bind FAD; that span reads EKQPEFQWH. A substrate-binding site is contributed by Lys74. An NADP(+)-binding site is contributed by 223–226; it reads SGQS. Substrate is bound by residues 269-272 and Asn300; that span reads NEIF. NADP(+) is bound at residue 300–302; that stretch reads NYS. A disordered region spans residues 430–474; the sequence is TEIPKGPDGSLFDASEEEATWRPASPITPASPSPPSTPTSSALSQ. 520–522 lines the FAD pocket; the sequence is SLL. Ser523 contributes to the substrate binding site.

This sequence belongs to the lysine N(6)-hydroxylase/L-ornithine N(5)-oxygenase family. Homotetramer. FAD is required as a cofactor.

The enzyme catalyses L-ornithine + NADPH + O2 = N(5)-hydroxy-L-ornithine + NADP(+) + H2O. The catalysed reaction is L-ornithine + NADH + O2 = N(5)-hydroxy-L-ornithine + NAD(+) + H2O. It functions in the pathway siderophore biosynthesis. Functionally, L-ornithine N(5)-monooxygenase; part of the siderophore basidioferrin biosynthetic pathway. The biosynthesis of basidioferrin depends on the hydroxylation of ornithine to N(5)-hydroxyornithine, catalyzed by the monooxygenase SMO1. The second step, the acylation of N(5)-hydroxy-L-ornithine is catalyzed by a not yet identified N-acyltransferase. Finally, assembly of basidioferrin is catalyzed by the nonribosomal peptide synthase (NRPS) NPS2 via amide bond formation between three L-AHO molecules to release the linear L-AHO trimer. The chain is L-ornithine N(5)-monooxygenase (SMO1) from Ceriporiopsis subvermispora (strain B) (White-rot fungus).